A 459-amino-acid polypeptide reads, in one-letter code: Bifunctional protein GlmU (459 aa).

Residues 1 to 229 (MLTQEIIIVI…YEEILGINNK (229 aa)) form a pyrophosphorylase region. Residues 11–14 (LAAG), Lys-25, Gln-76, 81–82 (GT), 103–105 (YGD), Gly-140, Glu-154, and Asn-227 each bind UDP-N-acetyl-alpha-D-glucosamine. Residue Asp-105 coordinates Mg(2+). A Mg(2+)-binding site is contributed by Asn-227. The tract at residues 230 to 250 (LQLSNLEKIFQKKQINKLLIN) is linker. The interval 251 to 459 (GVTIKDPSHF…MRSKKIIKKN (209 aa)) is N-acetyltransferase. 2 residues coordinate UDP-N-acetyl-alpha-D-glucosamine: Arg-333 and Lys-351. His-363 acts as the Proton acceptor in catalysis. 2 residues coordinate UDP-N-acetyl-alpha-D-glucosamine: Tyr-366 and Asn-377. Acetyl-CoA is bound by residues Ala-380, 386 to 387 (NY), Ser-405, and Ala-423.

It in the N-terminal section; belongs to the N-acetylglucosamine-1-phosphate uridyltransferase family. In the C-terminal section; belongs to the transferase hexapeptide repeat family. As to quaternary structure, homotrimer. Mg(2+) serves as cofactor.

The protein localises to the cytoplasm. The catalysed reaction is alpha-D-glucosamine 1-phosphate + acetyl-CoA = N-acetyl-alpha-D-glucosamine 1-phosphate + CoA + H(+). The enzyme catalyses N-acetyl-alpha-D-glucosamine 1-phosphate + UTP + H(+) = UDP-N-acetyl-alpha-D-glucosamine + diphosphate. It functions in the pathway nucleotide-sugar biosynthesis; UDP-N-acetyl-alpha-D-glucosamine biosynthesis; N-acetyl-alpha-D-glucosamine 1-phosphate from alpha-D-glucosamine 6-phosphate (route II): step 2/2. Its pathway is nucleotide-sugar biosynthesis; UDP-N-acetyl-alpha-D-glucosamine biosynthesis; UDP-N-acetyl-alpha-D-glucosamine from N-acetyl-alpha-D-glucosamine 1-phosphate: step 1/1. The protein operates within bacterial outer membrane biogenesis; LPS lipid A biosynthesis. In terms of biological role, catalyzes the last two sequential reactions in the de novo biosynthetic pathway for UDP-N-acetylglucosamine (UDP-GlcNAc). The C-terminal domain catalyzes the transfer of acetyl group from acetyl coenzyme A to glucosamine-1-phosphate (GlcN-1-P) to produce N-acetylglucosamine-1-phosphate (GlcNAc-1-P), which is converted into UDP-GlcNAc by the transfer of uridine 5-monophosphate (from uridine 5-triphosphate), a reaction catalyzed by the N-terminal domain. The polypeptide is Bifunctional protein GlmU (Buchnera aphidicola subsp. Acyrthosiphon pisum (strain 5A)).